Consider the following 410-residue polypeptide: Elongation factor Tu, chloroplastic (410 aa).

The tr-type G domain maps to 10-215; it reads KPHVNIGTIG…AVDQYIPTPK (206 aa). The interval 19–26 is G1; that stretch reads GHVDHGKT. 19–26 lines the GTP pocket; sequence GHVDHGKT. Thr-26 is a binding site for Mg(2+). The G2 stretch occupies residues 61–65; the sequence is GITIN. A G3 region spans residues 82–85; the sequence is DCPG. GTP-binding positions include 82-86 and 137-140; these read DCPGH and NKQD. The G4 stretch occupies residues 137–140; it reads NKQD. Residues 175-177 are G5; sequence SAL.

It belongs to the TRAFAC class translation factor GTPase superfamily. Classic translation factor GTPase family. EF-Tu/EF-1A subfamily.

It localises to the plastid. The protein localises to the chloroplast. The catalysed reaction is GTP + H2O = GDP + phosphate + H(+). Its function is as follows. GTP hydrolase that promotes the GTP-dependent binding of aminoacyl-tRNA to the A-site of ribosomes during protein biosynthesis. The protein is Elongation factor Tu, chloroplastic (tufA) of Nephroselmis olivacea (Green alga).